Here is a 455-residue protein sequence, read N- to C-terminus: Probable glycine dehydrogenase (decarboxylating) subunit 1 (455 aa).

Belongs to the GcvP family. N-terminal subunit subfamily. As to quaternary structure, the glycine cleavage system is composed of four proteins: P, T, L and H. In this organism, the P 'protein' is a heterodimer of two subunits.

It catalyses the reaction N(6)-[(R)-lipoyl]-L-lysyl-[glycine-cleavage complex H protein] + glycine + H(+) = N(6)-[(R)-S(8)-aminomethyldihydrolipoyl]-L-lysyl-[glycine-cleavage complex H protein] + CO2. Its function is as follows. The glycine cleavage system catalyzes the degradation of glycine. The P protein binds the alpha-amino group of glycine through its pyridoxal phosphate cofactor; CO(2) is released and the remaining methylamine moiety is then transferred to the lipoamide cofactor of the H protein. The sequence is that of Probable glycine dehydrogenase (decarboxylating) subunit 1 from Francisella philomiragia subsp. philomiragia (strain ATCC 25017 / CCUG 19701 / FSC 153 / O#319-036).